The following is a 503-amino-acid chain: AMP phosphorylase (503 aa).

AMP contacts are provided by residues G168, 194–199 (SRAITS), and T203. The Proton donor role is filled by D256. AMP is bound by residues S264 and K288.

The protein belongs to the thymidine/pyrimidine-nucleoside phosphorylase family. Type 2 subfamily.

The catalysed reaction is AMP + phosphate = alpha-D-ribose 1,5-bisphosphate + adenine. The enzyme catalyses CMP + phosphate = cytosine + alpha-D-ribose 1,5-bisphosphate. It catalyses the reaction UMP + phosphate = alpha-D-ribose 1,5-bisphosphate + uracil. Functionally, catalyzes the conversion of AMP and phosphate to adenine and ribose 1,5-bisphosphate (R15P). Exhibits phosphorylase activity toward CMP and UMP in addition to AMP. Functions in an archaeal AMP degradation pathway, together with R15P isomerase and RubisCO. This Pyrococcus furiosus (strain ATCC 43587 / DSM 3638 / JCM 8422 / Vc1) protein is AMP phosphorylase.